Here is a 449-residue protein sequence, read N- to C-terminus: Probable pectate lyase P59 (449 aa).

The N-terminal stretch at 1 to 22 is a signal peptide; sequence MGGPKIKYSFLFLCITFATIIP. Asn56, Asn80, and Asn81 each carry an N-linked (GlcNAc...) asparagine glycan. Ca(2+) contacts are provided by Asp245, Asp269, and Asp273. The active site involves Arg325.

This sequence belongs to the polysaccharide lyase 1 family. Ca(2+) is required as a cofactor. Expressed in anthers and pollen.

It carries out the reaction Eliminative cleavage of (1-&gt;4)-alpha-D-galacturonan to give oligosaccharides with 4-deoxy-alpha-D-galact-4-enuronosyl groups at their non-reducing ends.. It participates in glycan metabolism; pectin degradation; 2-dehydro-3-deoxy-D-gluconate from pectin: step 2/5. Functionally, might be needed during pollen development and tube growth. This chain is Probable pectate lyase P59 (LAT59), found in Solanum lycopersicum (Tomato).